A 519-amino-acid polypeptide reads, in one-letter code: Bifunctional purine biosynthesis protein PurH (519 aa).

Positions 1-147 (MAKITRALIS…KNNHDVTVLV (147 aa)) constitute an MGS-like domain.

The protein belongs to the PurH family.

The enzyme catalyses (6R)-10-formyltetrahydrofolate + 5-amino-1-(5-phospho-beta-D-ribosyl)imidazole-4-carboxamide = 5-formamido-1-(5-phospho-D-ribosyl)imidazole-4-carboxamide + (6S)-5,6,7,8-tetrahydrofolate. The catalysed reaction is IMP + H2O = 5-formamido-1-(5-phospho-D-ribosyl)imidazole-4-carboxamide. It participates in purine metabolism; IMP biosynthesis via de novo pathway; 5-formamido-1-(5-phospho-D-ribosyl)imidazole-4-carboxamide from 5-amino-1-(5-phospho-D-ribosyl)imidazole-4-carboxamide (10-formyl THF route): step 1/1. It functions in the pathway purine metabolism; IMP biosynthesis via de novo pathway; IMP from 5-formamido-1-(5-phospho-D-ribosyl)imidazole-4-carboxamide: step 1/1. This Trichlorobacter lovleyi (strain ATCC BAA-1151 / DSM 17278 / SZ) (Geobacter lovleyi) protein is Bifunctional purine biosynthesis protein PurH.